A 146-amino-acid chain; its full sequence is Arginine repressor (146 aa).

This sequence belongs to the ArgR family.

It is found in the cytoplasm. Its pathway is amino-acid biosynthesis; L-arginine biosynthesis [regulation]. Its function is as follows. Regulates arginine biosynthesis genes. This is Arginine repressor from Parabacteroides distasonis (strain ATCC 8503 / DSM 20701 / CIP 104284 / JCM 5825 / NCTC 11152).